The chain runs to 188 residues: MSAVELILLQRVENLGQMGDVVKVKPGYARNFLLPQGKAIRANALNRERFERERVQLEALNLKRREEAERLSERMHGLSVVLIRQAGDSGSLYGSVTTRDIAEAATAAGLTVARTQVILENPIKQLGLYDVRVALHPEVSIPVTVNVARSEEEAERQARGEEIGVEKEEPSGFVEEALEETVEAPAEA.

Over residues 149–170 the composition is skewed to basic and acidic residues; that stretch reads RSEEEAERQARGEEIGVEKEEP. The tract at residues 149-188 is disordered; the sequence is RSEEEAERQARGEEIGVEKEEPSGFVEEALEETVEAPAEA.

Belongs to the bacterial ribosomal protein bL9 family.

Functionally, binds to the 23S rRNA. This chain is Large ribosomal subunit protein bL9, found in Gluconacetobacter diazotrophicus (strain ATCC 49037 / DSM 5601 / CCUG 37298 / CIP 103539 / LMG 7603 / PAl5).